The primary structure comprises 103 residues: ATP synthase subunit H, mitochondrial (103 aa).

A mitochondrion-targeting transit peptide spans 1–26 (MSRILKSLSRSYSTTSPRLYVDVVQG).

The protein belongs to the ATPase h subunit family. In terms of assembly, F-type ATPases have 2 components, CF(1) - the catalytic core - and CF(0) - the membrane proton channel.

The protein localises to the mitochondrion. Its subcellular location is the mitochondrion inner membrane. Its function is as follows. Mitochondrial membrane ATP synthase (F(1)F(0) ATP synthase or Complex V) produces ATP from ADP in the presence of a proton gradient across the membrane which is generated by electron transport complexes of the respiratory chain. F-type ATPases consist of two structural domains, F(1) - containing the extramembraneous catalytic core and F(0) - containing the membrane proton channel, linked together by a central stalk and a peripheral stalk. During catalysis, ATP synthesis in the catalytic domain of F(1) is coupled via a rotary mechanism of the central stalk subunits to proton translocation. Part of the complex F(0) domain. Minor subunit located with subunit a in the membrane. The polypeptide is ATP synthase subunit H, mitochondrial (atp14) (Schizosaccharomyces pombe (strain 972 / ATCC 24843) (Fission yeast)).